The chain runs to 1219 residues: FYVE, RhoGEF and PH domain-containing protein 5 (1219 aa).

Disordered regions lie at residues 1–85, 94–113, 201–227, and 310–367; these read MGSP…SCQI, EEDF…PTES, SDTQ…GQVP, and GRES…PSSV. The span at 23–50 shows a compositional bias: acidic residues; that stretch reads EVFEEDSADAAEGEDQIEQEEPPNCDEE. The span at 201-214 shows a compositional bias: polar residues; sequence SDTQAASGTLSGYS. A compositionally biased stretch (basic and acidic residues) spans 319–337; that stretch reads REPEGAGLDSHRVRRKEDN. Over residues 346–356 the composition is skewed to polar residues; the sequence is SSGSFSQRSHL. The segment covering 357–367 has biased composition (low complexity); sequence PSSGTSTPSSV. T555 carries the post-translational modification Phosphothreonine. The segment covering 586–599 has biased composition (low complexity); that stretch reads ESKQQSSEQEAESA. Positions 586–644 are disordered; that stretch reads ESKQQSSEQEAESAYTEPYKVCPISAAPREDLTSDEEQGSSEEEDSASRDPSLSHKGEG. Acidic residues predominate over residues 618 to 630; it reads TSDEEQGSSEEED. Positions 631 to 644 are enriched in basic and acidic residues; the sequence is SASRDPSLSHKGEG. Residues 647 to 840 form the DH domain; the sequence is RALVIAQELL…SKVTDRANES (194 aa). Positions 869 to 963 constitute a PH 1 domain; sequence EFLKEGTLMR…WHYCLSRALP (95 aa). The FYVE-type zinc-finger motif lies at 998 to 1057; the sequence is VTHAMMCMNCGCDFSLTVRRHHCHACGKIVCRNCSRNKYPLKCLKNRMAKVCDGCFRELK. C1004, C1007, C1020, C1023, C1028, C1031, C1049, and C1052 together coordinate Zn(2+). The region spanning 1120–1218 is the PH 2 domain; that stretch reads GSAISGYLSR…WMEAMEDASV (99 aa).

As to expression, expressed in highly vascularized tissues, such as lung, kidney and ovary.

It localises to the cytoplasm. The protein resides in the cytoskeleton. The protein localises to the cell projection. It is found in the ruffle membrane. Its subcellular location is the endoplasmic reticulum. It localises to the golgi apparatus. The protein resides in the early endosome. Activates CDC42, a member of the Ras-like family of Rho- and Rac proteins, by exchanging bound GDP for free GTP. Mediates VEGF-induced CDC42 activation. May regulate proangiogenic action of VEGF in vascular endothelial cells, including network formation, directional movement and proliferation. May play a role in regulating the actin cytoskeleton and cell shape. The sequence is that of FYVE, RhoGEF and PH domain-containing protein 5 (Fgd5) from Mus musculus (Mouse).